A 144-amino-acid polypeptide reads, in one-letter code: Large ribosomal subunit protein uL15 (144 aa).

The segment at 1–49 is disordered; it reads MRLNTLSPAAGSKSAPKRVGRGIGSGLGKTAGRGHKGQKSRSGGGVRVG. Positions 21–31 are enriched in gly residues; that stretch reads RGIGSGLGKTA.

The protein belongs to the universal ribosomal protein uL15 family. In terms of assembly, part of the 50S ribosomal subunit.

In terms of biological role, binds to the 23S rRNA. The protein is Large ribosomal subunit protein uL15 of Shewanella frigidimarina (strain NCIMB 400).